The chain runs to 133 residues: Sigma factor-binding protein Crl (133 aa).

The tract at residues 99 to 122 (TLDDFYVKLTKFVKEDCQLDLQAS) is essential for activity.

It belongs to the Crl family.

The protein localises to the cytoplasm. In terms of biological role, binds to the sigma-S subunit of RNA polymerase, activating expression of sigma-S-regulated genes. Stimulates RNA polymerase holoenzyme formation and may bind to several other sigma factors, such as sigma-70 and sigma-32. In Photobacterium profundum (strain SS9), this protein is Sigma factor-binding protein Crl.